The sequence spans 334 residues: Putative transport protein MJ1177 (334 aa).

The next 7 membrane-spanning stretches (helical) occupy residues 13 to 33 (VIVG…DVLA), 61 to 81 (LAIS…LLTF), 138 to 158 (IIDV…TFYF), 191 to 211 (SYKN…ILSY), 234 to 254 (LLPI…FFLI), 259 to 279 (KAVF…DFVI), and 293 to 313 (VLVV…GFAI).

Belongs to the autoinducer-2 exporter (AI-2E) (TC 2.A.86) family.

It localises to the cell membrane. In Methanocaldococcus jannaschii (strain ATCC 43067 / DSM 2661 / JAL-1 / JCM 10045 / NBRC 100440) (Methanococcus jannaschii), this protein is Putative transport protein MJ1177.